A 206-amino-acid chain; its full sequence is Probable GTP-binding protein EngB (206 aa).

Residues 23 to 197 enclose the EngB-type G domain; it reads QGIEVAFAGR…ERVLDKWFGY (175 aa). GTP is bound by residues 31 to 38, 58 to 62, 76 to 79, 143 to 146, and 176 to 178; these read GRSNAGKS, GRTQL, DLPG, TKAD, and FSS. Residues S38 and T60 each contribute to the Mg(2+) site.

Belongs to the TRAFAC class TrmE-Era-EngA-EngB-Septin-like GTPase superfamily. EngB GTPase family. The cofactor is Mg(2+).

Functionally, necessary for normal cell division and for the maintenance of normal septation. This Pseudoalteromonas atlantica (strain T6c / ATCC BAA-1087) protein is Probable GTP-binding protein EngB.